Here is an 89-residue protein sequence, read N- to C-terminus: uncharacterized protein (89 aa).

The next 3 membrane-spanning stretches (helical) occupy residues 9-29 (ICNF…LHSI), 35-55 (ISLS…YIYL), and 65-85 (ILFA…FGTS).

It localises to the membrane. This is an uncharacterized protein from Schizosaccharomyces pombe (strain 972 / ATCC 24843) (Fission yeast).